A 335-amino-acid chain; its full sequence is Ubiquinone biosynthesis protein COQ4, mitochondrial (335 aa).

The transit peptide at 1-10 (MLRLSLLRST) directs the protein to the mitochondrion. Zn(2+) is bound by residues H210, D211, H214, and E226.

Belongs to the COQ4 family. As to quaternary structure, component of a multi-subunit COQ enzyme complex, composed of at least COQ3, COQ4, COQ5, COQ6, COQ7 and COQ9. Interacts with COQ3. It depends on Zn(2+) as a cofactor.

The protein localises to the mitochondrion inner membrane. It carries out the reaction 4-hydroxy-3-methoxy-5-(all-trans-hexaprenyl)benzoate + H(+) = 2-methoxy-6-(all-trans-hexaprenyl)phenol + CO2. It participates in cofactor biosynthesis; ubiquinone biosynthesis. Functionally, lyase that catalyzes the C1-decarboxylation of 4-hydroxy-3-methoxy-5-(all-trans-hexaprenyl)benzoic acid into 2-methoxy-6-(all-trans-hexaprenyl)phenol during ubiquinone biosynthesis. The protein is Ubiquinone biosynthesis protein COQ4, mitochondrial of Saccharomyces cerevisiae (strain RM11-1a) (Baker's yeast).